A 394-amino-acid polypeptide reads, in one-letter code: Dihydroorotase (394 aa).

H15, H17, K98, H135, H175, and D245 together coordinate Zn(2+). N6-carboxylysine is present on K98.

It belongs to the metallo-dependent hydrolases superfamily. DHOase family. Class II DHOase subfamily. Zn(2+) serves as cofactor.

The enzyme catalyses (S)-dihydroorotate + H2O = N-carbamoyl-L-aspartate + H(+). The protein operates within pyrimidine metabolism; UMP biosynthesis via de novo pathway; (S)-dihydroorotate from bicarbonate: step 3/3. The sequence is that of Dihydroorotase (PYR3) from Mycosarcoma maydis (Corn smut fungus).